The sequence spans 240 residues: MLLGVNIDHVATLRQARGTRYPDPVKAALDAEEAGADGITVHLREDRRHIQERDVLLLKDVLQTRMNFEMGVTEEMMLFAEKIRPAHICLVPETRQELTTEGGLDVAGQEARIKAAVERLSRTGAEVSLFIDADERQIEASRRVGAPAIELHTGRYADAETPTDVAEELKRIVDGVAFGVGQGLIVNAGHGLHYHNVEAVAAIKGINELNIGHALVAHALFVGFKAAVAEMKALIVAASR.

Asn6 lines the 3-amino-2-oxopropyl phosphate pocket. Residue 8–9 (DH) coordinates 1-deoxy-D-xylulose 5-phosphate. Arg17 lines the 3-amino-2-oxopropyl phosphate pocket. The Proton acceptor role is filled by His42. 2 residues coordinate 1-deoxy-D-xylulose 5-phosphate: Arg44 and His49. Glu69 (proton acceptor) is an active-site residue. Thr99 provides a ligand contact to 1-deoxy-D-xylulose 5-phosphate. Residue His190 is the Proton donor of the active site. 3-amino-2-oxopropyl phosphate contacts are provided by residues Gly191 and 212-213 (GH).

It belongs to the PNP synthase family. In terms of assembly, homooctamer; tetramer of dimers.

The protein resides in the cytoplasm. The catalysed reaction is 3-amino-2-oxopropyl phosphate + 1-deoxy-D-xylulose 5-phosphate = pyridoxine 5'-phosphate + phosphate + 2 H2O + H(+). It participates in cofactor biosynthesis; pyridoxine 5'-phosphate biosynthesis; pyridoxine 5'-phosphate from D-erythrose 4-phosphate: step 5/5. Catalyzes the complicated ring closure reaction between the two acyclic compounds 1-deoxy-D-xylulose-5-phosphate (DXP) and 3-amino-2-oxopropyl phosphate (1-amino-acetone-3-phosphate or AAP) to form pyridoxine 5'-phosphate (PNP) and inorganic phosphate. In Pseudomonas entomophila (strain L48), this protein is Pyridoxine 5'-phosphate synthase.